A 486-amino-acid polypeptide reads, in one-letter code: 23S rRNA (uracil(1939)-C(5))-methyltransferase RlmD (486 aa).

Residues 14–76 (AAQDGSGLPE…NHWEQANLTA (63 aa)) enclose the TRAM domain. Residues Cys-89, Cys-99, Cys-102, and Cys-181 each coordinate [4Fe-4S] cluster. The S-adenosyl-L-methionine site is built by Gln-289, Phe-318, Asn-323, Glu-339, Asn-374, and Asp-395. Cys-442 acts as the Nucleophile in catalysis.

This sequence belongs to the class I-like SAM-binding methyltransferase superfamily. RNA M5U methyltransferase family. RlmD subfamily.

The catalysed reaction is uridine(1939) in 23S rRNA + S-adenosyl-L-methionine = 5-methyluridine(1939) in 23S rRNA + S-adenosyl-L-homocysteine + H(+). Catalyzes the formation of 5-methyl-uridine at position 1939 (m5U1939) in 23S rRNA. The protein is 23S rRNA (uracil(1939)-C(5))-methyltransferase RlmD of Verminephrobacter eiseniae (strain EF01-2).